Here is a 97-residue protein sequence, read N- to C-terminus: Ferredoxin-thioredoxin reductase, variable chain (97 aa).

The protein belongs to the ferredoxin thioredoxin reductase alpha subunit family. In terms of assembly, heterodimer of subunit A (variable subunit) and subunit B (catalytic subunit). Heterodimeric FTR forms a complex with ferredoxin and thioredoxin.

Its subcellular location is the plastid. It is found in the chloroplast. Its function is as follows. Variable subunit of the ferredoxin-thioredoxin reductase (FTR), which catalyzes the two-electron reduction of thioredoxins by the electrons provided by reduced ferredoxin. This chain is Ferredoxin-thioredoxin reductase, variable chain, found in Zea mays (Maize).